A 202-amino-acid polypeptide reads, in one-letter code: Large ribosomal subunit protein mL40 (202 aa).

The segment at 42 to 79 (IQHQQTASYASKGKSGPPAGMFSGQKAGSKKSKGPKQV) is disordered.

It belongs to the mitochondrion-specific ribosomal protein mL40 family. Component of the mitochondrial large ribosomal subunit (mt-LSU). Mature N.crassa 74S mitochondrial ribosomes consist of a small (37S) and a large (54S) subunit. The 37S small subunit contains a 16S ribosomal RNA (16S mt-rRNA) and 32 different proteins. The 54S large subunit contains a 23S rRNA (23S mt-rRNA) and 42 different proteins. mL40 is binding to NAD.

It is found in the mitochondrion. Its function is as follows. Component of the mitochondrial ribosome (mitoribosome), a dedicated translation machinery responsible for the synthesis of mitochondrial genome-encoded proteins, including at least some of the essential transmembrane subunits of the mitochondrial respiratory chain. The mitoribosomes are attached to the mitochondrial inner membrane and translation products are cotranslationally integrated into the membrane. This Neurospora crassa (strain ATCC 24698 / 74-OR23-1A / CBS 708.71 / DSM 1257 / FGSC 987) protein is Large ribosomal subunit protein mL40 (mrpl28).